The primary structure comprises 273 residues: Eukaryotic translation initiation factor 3 subunit G-2 (273 aa).

Positions 165-193 (KYVPPFMKDGGGGPGGKNWGRGRERDDSS) are disordered. Residues 173-183 (DGGGGPGGKNW) show a composition bias toward gly residues. The RRM domain occupies 193–271 (SAVRISNLSE…LILCVEWSKP (79 aa)).

Belongs to the eIF-3 subunit G family. In terms of assembly, component of the eukaryotic translation initiation factor 3 (eIF-3) complex. The eIF-3 complex interacts with pix.

The protein localises to the cytoplasm. RNA-binding component of the eukaryotic translation initiation factor 3 (eIF-3) complex, which is involved in protein synthesis of a specialized repertoire of mRNAs and, together with other initiation factors, stimulates binding of mRNA and methionyl-tRNAi to the 40S ribosome. The eIF-3 complex specifically targets and initiates translation of a subset of mRNAs involved in cell proliferation. This subunit can bind 18S rRNA. This chain is Eukaryotic translation initiation factor 3 subunit G-2, found in Drosophila yakuba (Fruit fly).